A 209-amino-acid chain; its full sequence is Ribosomal RNA large subunit methyltransferase E (209 aa).

5 residues coordinate S-adenosyl-L-methionine: glycine 63, tryptophan 65, aspartate 83, aspartate 99, and aspartate 124. Catalysis depends on lysine 164, which acts as the Proton acceptor. Residues 191–209 (EASRGRSREVYIVATGYKG) form the TRAM domain.

It belongs to the class I-like SAM-binding methyltransferase superfamily. RNA methyltransferase RlmE family.

It localises to the cytoplasm. The enzyme catalyses uridine(2552) in 23S rRNA + S-adenosyl-L-methionine = 2'-O-methyluridine(2552) in 23S rRNA + S-adenosyl-L-homocysteine + H(+). Functionally, specifically methylates the uridine in position 2552 of 23S rRNA at the 2'-O position of the ribose in the fully assembled 50S ribosomal subunit. This Haemophilus influenzae (strain 86-028NP) protein is Ribosomal RNA large subunit methyltransferase E.